We begin with the raw amino-acid sequence, 207 residues long: Pyrrolidone-carboxylate peptidase (207 aa).

Residues Glu80, Cys143, and His167 contribute to the active site.

The protein belongs to the peptidase C15 family. As to quaternary structure, homotetramer.

The protein resides in the cytoplasm. It carries out the reaction Release of an N-terminal pyroglutamyl group from a polypeptide, the second amino acid generally not being Pro.. Removes 5-oxoproline from various penultimate amino acid residues except L-proline. The sequence is that of Pyrrolidone-carboxylate peptidase from Coprothermobacter proteolyticus (strain ATCC 35245 / DSM 5265 / OCM 4 / BT).